Reading from the N-terminus, the 142-residue chain is ATP synthase epsilon chain (142 aa).

The protein belongs to the ATPase epsilon chain family. As to quaternary structure, F-type ATPases have 2 components, CF(1) - the catalytic core - and CF(0) - the membrane proton channel. CF(1) has five subunits: alpha(3), beta(3), gamma(1), delta(1), epsilon(1). CF(0) has three main subunits: a, b and c.

It localises to the cell inner membrane. In terms of biological role, produces ATP from ADP in the presence of a proton gradient across the membrane. This is ATP synthase epsilon chain from Haemophilus influenzae (strain 86-028NP).